Consider the following 439-residue polypeptide: Type 3 secretion system ATPase (439 aa).

172-177 (GGGKST) is a binding site for ATP.

This sequence belongs to the ATPase alpha/beta chains family. T3SS ATPase subfamily. In terms of assembly, the core secretion machinery of the T3SS is composed of approximately 20 different proteins, including cytoplasmic components, a base, an export apparatus and a needle. This subunit is part of the cytosolic complex. Forms homohexamers.

It localises to the cytoplasm. It carries out the reaction ATP + H2O + cellular proteinSide 1 = ADP + phosphate + cellular proteinSide 2.. Functionally, ATPase component of the type III secretion system (T3SS), also called injectisome, which is used to inject bacterial effector proteins into eukaryotic host cells. Acts as a molecular motor to provide the energy that is required for the export of proteins. Required for type III secretion apparatus (T3SA) formation, proper protein secretion, host cell invasion and virulence. May play a critical role in T3SS substrate recognition, disassembly of the effector/chaperone complex and unfolding of the effector in an ATP-dependent manner prior to secretion. The polypeptide is Type 3 secretion system ATPase (Yersinia pseudotuberculosis serotype I (strain IP32953)).